A 136-amino-acid polypeptide reads, in one-letter code: UPF0275 protein PM0493 (136 aa).

Belongs to the UPF0275 family.

This chain is UPF0275 protein PM0493, found in Pasteurella multocida (strain Pm70).